The chain runs to 305 residues: Spore coat protein CotA (305 aa).

The protein localises to the spore coat. The protein resides in the spore. It localises to the perispore. Contributes to maintain proper thickness of the spore coat. May contribute to the formation of polar appendages. May play an important role in assembly of the outer layers of the spore coat. The polypeptide is Spore coat protein CotA (Clostridioides difficile (strain 630) (Peptoclostridium difficile)).